A 360-amino-acid polypeptide reads, in one-letter code: Ferredoxin--NADP reductase, leaf isozyme 1, chloroplastic (360 aa).

The transit peptide at 1-49 directs the protein to the chloroplast; the sequence is MAAAISAAVSLPSSKSSSLLTKISSVSPQRIFLKKSTVCYRRVVSVKAQ. An FAD-binding FR-type domain is found at 81-203; sequence KNPYTGRCLL…TGPVGKEMLM (123 aa). Residues 139 to 142, 160 to 162, Y166, and 177 to 179 each bind FAD; these read RLYS, CVK, and VCS. NADP(+)-binding residues include S142 and K162. A disulfide bond links C178 and C183. A Phosphoserine modification is found at S179. Position 210 is a phosphothreonine (T210). T218 contributes to the FAD binding site. Residues T218, 250 to 251, 280 to 281, K290, 319 to 320, and E358 contribute to the NADP(+) site; these read VP, SR, and GL.

Belongs to the ferredoxin--NADP reductase type 1 family. As to quaternary structure, heterodimer with LFNR2. Interacts with PGRL1A and PGRL1B. Interacts with TIC62. Component of high molecular weight thylakoid LFNRs-containing protein complexes containing LIR1, LFNR1, LFNR2, TIC62 and TROL proteins. Interacts directly with LIR1 and TIC62; LIR1 increases the affinity of LFNR1 and LFNR2 for TIC62. Binds to YCF54 in chloroplasts. FAD serves as cofactor. Post-translationally, may form interchain disulfide bonds with LIR1. Expressed in shoots. Restricted to green tissues, being more abundant in siliques.

The protein resides in the plastid. It localises to the chloroplast stroma. The protein localises to the chloroplast thylakoid membrane. The enzyme catalyses 2 reduced [2Fe-2S]-[ferredoxin] + NADP(+) + H(+) = 2 oxidized [2Fe-2S]-[ferredoxin] + NADPH. The protein operates within energy metabolism; photosynthesis. Its function is as follows. Plays a key role in regulating the relative amounts of cyclic and non-cyclic electron flow to meet the demands of the plant for ATP and reducing power. Probable electron donor required for the MgProto monomethylester (MgProtoME) cyclase complex reaction to form protochlorophyllide, thus connecting chlorophyll synthesis with photosynthetic activity. This chain is Ferredoxin--NADP reductase, leaf isozyme 1, chloroplastic, found in Arabidopsis thaliana (Mouse-ear cress).